Reading from the N-terminus, the 221-residue chain is MTETSPTPVLDTAQARVLGCLIEKEATTPDAYPLTVNAAQVAANQKTAREPVLNLQTGVVHHALRQLENLGLVRQQFCSRAERYEHRLGSVLDLTRQQVALIGLLLRGPQTLGELYARSERLARFADTDDVRHHLDRLIQRGLAAQLPRASGQREDRYAHLLSGELDVEALQAATARAAQGARSGSDTSELEARVQSLEATVADMQDALAALQARLNAAGA.

This sequence belongs to the UPF0502 family.

This Xanthomonas oryzae pv. oryzae (strain MAFF 311018) protein is UPF0502 protein XOO0224.